The sequence spans 446 residues: Ribosome biogenesis protein WDR12 homolog (446 aa).

The interval 21–105 (VQITFFSKDK…ETILKIECII (85 aa)) is ubiquitin-like (UBL) domain. WD repeat units follow at residues 171-211 (KCSG…LVEK) and 216-255 (GHERAVECVSVNSDATRAISGSVDTNLKVWNLDPSDEATI). Positions 256 to 275 (YEKEEEESSAKKKRKKDTRT) are disordered. WD repeat units follow at residues 284–324 (GHRD…EVSR), 326–365 (KGPKSFTSIDIHPTSNLLISSCTDAIPRLYDPKNRDGAMV), 371–412 (GHQN…SSLF), and 416–446 (GHEDRILCAAWNEGLIATGSADCSIKIFETS).

This sequence belongs to the WD repeat WDR12/YTM1 family.

Its subcellular location is the nucleus. The protein resides in the nucleolus. The protein localises to the nucleoplasm. In terms of biological role, required for maturation of ribosomal RNAs and formation of the large ribosomal subunit. The polypeptide is Ribosome biogenesis protein WDR12 homolog (Caenorhabditis briggsae).